Consider the following 440-residue polypeptide: Xylose isomerase (440 aa).

Catalysis depends on residues His-101 and Asp-104. Residues Glu-232, Glu-268, His-271, Asp-296, Asp-307, Asp-309, and Asp-339 each contribute to the Mg(2+) site.

The protein belongs to the xylose isomerase family. In terms of assembly, homotetramer. The cofactor is Mg(2+).

Its subcellular location is the cytoplasm. The enzyme catalyses alpha-D-xylose = alpha-D-xylulofuranose. This is Xylose isomerase from Salmonella agona (strain SL483).